Consider the following 347-residue polypeptide: GMP reductase (347 aa).

108 to 131 (ADFDKMKQILALSPSLKFICIDVA) is an NADP(+) binding site. K(+) is bound by residues G181 and G183. C186 serves as the catalytic Thioimidate intermediate. 216 to 239 (IVSDGGCSVPGDVAKAFGGGADFV) contacts NADP(+).

The protein belongs to the IMPDH/GMPR family. GuaC type 1 subfamily. In terms of assembly, homotetramer.

The catalysed reaction is IMP + NH4(+) + NADP(+) = GMP + NADPH + 2 H(+). In terms of biological role, catalyzes the irreversible NADPH-dependent deamination of GMP to IMP. It functions in the conversion of nucleobase, nucleoside and nucleotide derivatives of G to A nucleotides, and in maintaining the intracellular balance of A and G nucleotides. The polypeptide is GMP reductase (Yersinia pestis bv. Antiqua (strain Antiqua)).